Here is a 358-residue protein sequence, read N- to C-terminus: Heme A synthase 1 (358 aa).

A run of 5 helical transmembrane segments spans residues 11–31 (LVGTWLLVICFMIFGMVVGGG), 98–117 (WGRLMAVVFLVPLAVFRLRG), 123–143 (LTAWLLFLFGLGAGEATMGWY), 159–179 (LYLGPHFVLAMLIFTAMLWTA), and 199–219 (LLSVSIGLIIATIGLGALVAA). His-262 serves as a coordination point for heme. 3 helical membrane passes run 264–284 (VAATVTAIVVVIAAAMGLRAP), 292–312 (LFLLLAGLVSLQYILGMSTLV), and 315–335 (MAELGYVHELNAVLLLAACIA). A heme-binding site is contributed by His-322.

This sequence belongs to the COX15/CtaA family. Type 2 subfamily. As to quaternary structure, interacts with CtaB. Heme b serves as cofactor.

It is found in the cell membrane. The enzyme catalyses Fe(II)-heme o + 2 A + H2O = Fe(II)-heme a + 2 AH2. The protein operates within porphyrin-containing compound metabolism; heme A biosynthesis; heme A from heme O: step 1/1. Catalyzes the conversion of heme O to heme A by two successive hydroxylations of the methyl group at C8. The first hydroxylation forms heme I, the second hydroxylation results in an unstable dihydroxymethyl group, which spontaneously dehydrates, resulting in the formyl group of heme A. The sequence is that of Heme A synthase 1 from Acidiphilium cryptum (strain JF-5).